Reading from the N-terminus, the 141-residue chain is Nucleoside diphosphate kinase (141 aa).

ATP is bound by residues lysine 11, phenylalanine 59, arginine 87, threonine 93, arginine 104, and asparagine 114. Histidine 117 functions as the Pros-phosphohistidine intermediate in the catalytic mechanism.

The protein belongs to the NDK family. Homotetramer. It depends on Mg(2+) as a cofactor.

Its subcellular location is the cytoplasm. The catalysed reaction is a 2'-deoxyribonucleoside 5'-diphosphate + ATP = a 2'-deoxyribonucleoside 5'-triphosphate + ADP. It catalyses the reaction a ribonucleoside 5'-diphosphate + ATP = a ribonucleoside 5'-triphosphate + ADP. Major role in the synthesis of nucleoside triphosphates other than ATP. The ATP gamma phosphate is transferred to the NDP beta phosphate via a ping-pong mechanism, using a phosphorylated active-site intermediate. The polypeptide is Nucleoside diphosphate kinase (Verminephrobacter eiseniae (strain EF01-2)).